Here is a 213-residue protein sequence, read N- to C-terminus: MSPRVVVTGTDTGIGKTVFSAALVGALDGVYWKPVQAGLDEETDRDTVLRLSGLPAERMLPEAYRLNTPASPHLAAEIDGVTIDPAKLALPQHDRPLVVEGAGGLLTPLTRSVSYIDVIASWHAPVVLCARTTLGTINHSLLSIEALRARDIELLGIAFIGEAHAESENIIAAMGQVRRLGRLPHLASLTTDSLKAAFADAFNIGDFFKDATA.

Residue G13–V18 participates in ATP binding. Residue T17 coordinates Mg(2+). The active site involves K33. E100 serves as a coordination point for Mg(2+). ATP is bound by residues E100 to G103 and P184 to L186.

It belongs to the dethiobiotin synthetase family. In terms of assembly, homodimer. Mg(2+) is required as a cofactor.

It is found in the cytoplasm. It carries out the reaction (7R,8S)-7,8-diammoniononanoate + CO2 + ATP = (4R,5S)-dethiobiotin + ADP + phosphate + 3 H(+). It participates in cofactor biosynthesis; biotin biosynthesis; biotin from 7,8-diaminononanoate: step 1/2. Its function is as follows. Catalyzes a mechanistically unusual reaction, the ATP-dependent insertion of CO2 between the N7 and N8 nitrogen atoms of 7,8-diaminopelargonic acid (DAPA, also called 7,8-diammoniononanoate) to form a ureido ring. The sequence is that of ATP-dependent dethiobiotin synthetase BioD from Rhodopseudomonas palustris (strain BisA53).